The following is a 331-amino-acid chain: Serpentine receptor class alpha-1 (331 aa).

The next 7 membrane-spanning stretches (helical) occupy residues 22–42 (FAVF…VIAV), 57–77 (IILV…AIIS), 104–124 (YTEV…GILI), 143–163 (VGII…QIII), 189–209 (FLFI…AVMF), 238–258 (ICVV…GVLI), and 274–294 (LITW…ILIF).

It belongs to the nematode receptor-like protein sra family.

The protein localises to the membrane. This Caenorhabditis elegans protein is Serpentine receptor class alpha-1 (sra-1).